The primary structure comprises 376 residues: C2H2 type master regulator of conidiophore development brlA (376 aa).

Positions threonine 20–alanine 29 are enriched in low complexity. Disordered stretches follow at residues threonine 20–leucine 47, histidine 197–asparagine 229, and glutamate 241–glycine 267. The span at threonine 34–glutamate 44 shows a compositional bias: polar residues. Residues histidine 197 to alanine 209 show a composition bias toward basic residues. Positions glutamine 219–asparagine 229 are enriched in polar residues. Residues glutamate 241 to glutamate 256 show a composition bias toward basic and acidic residues. A C2H2-type 1; degenerate zinc finger spans residues cysteine 277–phenylalanine 301. A C2H2-type 2 zinc finger spans residues phenylalanine 309–histidine 332. The interval isoleucine 351–phenylalanine 376 is disordered. Basic and acidic residues predominate over residues serine 367–phenylalanine 376.

It is found in the nucleus. In terms of biological role, brlA, abaA and wetA are pivotal regulators of conidiophore development and conidium maturation. They act individually and together to regulate their own expression and that of numerous other sporulation-specific genes. Binds promoters of target genes at brlA response elements (BREs) containing the conserved sequence 5'-(C/A)(A/G)AGGG(G/A)-3'. The polypeptide is C2H2 type master regulator of conidiophore development brlA (Hapsidospora chrysogena (Acremonium chrysogenum)).